A 308-amino-acid polypeptide reads, in one-letter code: Methionine synthase (308 aa).

His-201, Cys-203, Glu-224, and Cys-285 together coordinate Zn(2+).

It belongs to the archaeal MetE family. Requires Zn(2+) as cofactor.

The protein operates within amino-acid biosynthesis; L-methionine biosynthesis via de novo pathway. Catalyzes the transfer of a methyl group to L-homocysteine resulting in methionine formation. Can use methylcobalamin and methylcobinamide as methyl donors, but methylcobalamin is not considered to be the physiological substrate. This chain is Methionine synthase, found in Methanothermobacter thermautotrophicus (strain ATCC 29096 / DSM 1053 / JCM 10044 / NBRC 100330 / Delta H) (Methanobacterium thermoautotrophicum).